The sequence spans 329 residues: MFRGPLDTPWAADVSPSGPRGIKAGRSALLVPILGSIWGAWRPEPGATRYRTLDPMAAVRSSSRLTPFSIQAILNRKEERAHTFPRLATAVSPACCWRIFGESEAEGLGSPCGGAPGAGAGGEPSGWDSDSALSEEGELGRPGDIGERKKQRPLEARAKGEDEEETPGCSDCEIGASVPDPSPPDEDPKCEQLMLEPPKQRKKRSRAAFSHAQVFELERRFNHQRYLSGPERADLAASLKLTETQVKIWFQNRRYKTKRRQMATDLLAAAPAAKKVAVKVLVRDDQRQYHPGEVLHPSLLPLQAPYFYPYYCALPGWTLSAAACSRGTP.

The tract at residues 107–188 (GLGSPCGGAP…PDPSPPDEDP (82 aa)) is disordered. Gly residues predominate over residues 110 to 124 (SPCGGAPGAGAGGEP). Basic and acidic residues predominate over residues 138-160 (ELGRPGDIGERKKQRPLEARAKG). The segment at residues 202–261 (KKRSRAAFSHAQVFELERRFNHQRYLSGPERADLAASLKLTETQVKIWFQNRRYKTKRRQ) is a DNA-binding region (homeobox).

Belongs to the NK-3 homeobox family. In terms of tissue distribution, first expressed in developing facial cartilage in early tailbud embryos, with expression localized to the basihyobranchial, palatoquadrate and possibly Meckel's cartilages. Shortly after, a second area of expression is seen in the musculature of the anterior gut. During late embryogenesis, gut expression extends into hindgut tissues. In adults, expressed at a high level in the kidney, pancreas, spleen and stomach and at a slightly lower level in the intestine, skeletal muscle and tongue. Adult heart, liver and lung show little or no expression.

The protein resides in the nucleus. The protein is Homeobox protein Nkx-3.2 (nkx3-2) of Xenopus laevis (African clawed frog).